Here is a 429-residue protein sequence, read N- to C-terminus: Glutamate-1-semialdehyde 2,1-aminomutase 2 (429 aa).

Lys-268 carries the N6-(pyridoxal phosphate)lysine modification.

It belongs to the class-III pyridoxal-phosphate-dependent aminotransferase family. HemL subfamily. Homodimer. Pyridoxal 5'-phosphate serves as cofactor.

The protein localises to the cytoplasm. The catalysed reaction is (S)-4-amino-5-oxopentanoate = 5-aminolevulinate. It participates in porphyrin-containing compound metabolism; protoporphyrin-IX biosynthesis; 5-aminolevulinate from L-glutamyl-tRNA(Glu): step 2/2. This is Glutamate-1-semialdehyde 2,1-aminomutase 2 from Staphylococcus aureus (strain MSSA476).